The primary structure comprises 525 residues: NAD(P)H-quinone oxidoreductase chain 4 1 (525 aa).

14 consecutive transmembrane segments (helical) span residues 6–26, 36–56, 91–111, 115–135, 136–156, 169–189, 212–232, 243–263, 277–297, 314–334, 335–355, 375–397, 417–437, and 464–484; these read FPWL…IPII, WYAL…FYTS, LIIL…PVTL, LFYF…AVQD, LLLF…LLAI, FILY…TMAF, LLLY…IPLH, TAPA…YALI, FAPV…LTSF, MGFV…GAVL, QMVS…ATYD, IFAM…GFVA, VIVV…LLSM, and VFVI…PKLL.

This sequence belongs to the complex I subunit 4 family.

The protein localises to the cellular thylakoid membrane. The catalysed reaction is a plastoquinone + NADH + (n+1) H(+)(in) = a plastoquinol + NAD(+) + n H(+)(out). It carries out the reaction a plastoquinone + NADPH + (n+1) H(+)(in) = a plastoquinol + NADP(+) + n H(+)(out). NDH-1 shuttles electrons from NAD(P)H, via FMN and iron-sulfur (Fe-S) centers, to quinones in the respiratory chain. The immediate electron acceptor for the enzyme in this species is believed to be plastoquinone. Couples the redox reaction to proton translocation (for every two electrons transferred, four hydrogen ions are translocated across the cytoplasmic membrane), and thus conserves the redox energy in a proton gradient. This is NAD(P)H-quinone oxidoreductase chain 4 1 from Trichormus variabilis (strain ATCC 29413 / PCC 7937) (Anabaena variabilis).